The chain runs to 263 residues: Small ribosomal subunit protein eS4 (263 aa).

The 63-residue stretch at 42–104 (LPLIIFLRNK…TGENFRLIYD (63 aa)) folds into the S4 RNA-binding domain. Residue Lys-230 forms a Glycyl lysine isopeptide (Lys-Gly) (interchain with G-Cter in SUMO2) linkage. At Lys-233 the chain carries N6-acetyllysine.

Belongs to the eukaryotic ribosomal protein eS4 family. As to quaternary structure, component of the small ribosomal subunit. Part of the small subunit (SSU) processome, composed of more than 70 proteins and the RNA chaperone small nucleolar RNA (snoRNA) U3. Identified in a IGF2BP1-dependent mRNP granule complex containing untranslated mRNAs.

It localises to the cytoplasm. It is found in the nucleus. The protein localises to the nucleolus. Component of the small ribosomal subunit. The ribosome is a large ribonucleoprotein complex responsible for the synthesis of proteins in the cell. Part of the small subunit (SSU) processome, first precursor of the small eukaryotic ribosomal subunit. During the assembly of the SSU processome in the nucleolus, many ribosome biogenesis factors, an RNA chaperone and ribosomal proteins associate with the nascent pre-rRNA and work in concert to generate RNA folding, modifications, rearrangements and cleavage as well as targeted degradation of pre-ribosomal RNA by the RNA exosome. The chain is Small ribosomal subunit protein eS4 (RPS4X) from Oryctolagus cuniculus (Rabbit).